A 411-amino-acid polypeptide reads, in one-letter code: Peptidase T (411 aa).

Residue His79 participates in Zn(2+) binding. The active site involves Asp81. Asp142 lines the Zn(2+) pocket. Glu176 functions as the Proton acceptor in the catalytic mechanism. Zn(2+) contacts are provided by Glu177, Asp199, and His381.

It belongs to the peptidase M20B family. Requires Zn(2+) as cofactor.

The protein localises to the cytoplasm. The enzyme catalyses Release of the N-terminal residue from a tripeptide.. Its function is as follows. Cleaves the N-terminal amino acid of tripeptides. This is Peptidase T from Exiguobacterium sibiricum (strain DSM 17290 / CCUG 55495 / CIP 109462 / JCM 13490 / 255-15).